The primary structure comprises 586 residues: Membrane protein insertase YidC (586 aa).

The next 5 helical transmembrane spans lie at 5–25, 371–391, 436–456, 486–506, and 522–542; these read TLIG…LMAP, GVII…LTMA, LGGC…FYVF, IPLY…AVFF, and FMMY…PSGL.

This sequence belongs to the OXA1/ALB3/YidC family. Type 1 subfamily. As to quaternary structure, interacts with the Sec translocase complex via SecD. Specifically interacts with transmembrane segments of nascent integral membrane proteins during membrane integration.

The protein resides in the cell inner membrane. Required for the insertion and/or proper folding and/or complex formation of integral membrane proteins into the membrane. Involved in integration of membrane proteins that insert both dependently and independently of the Sec translocase complex, as well as at least some lipoproteins. Aids folding of multispanning membrane proteins. This Chloroherpeton thalassium (strain ATCC 35110 / GB-78) protein is Membrane protein insertase YidC.